A 369-amino-acid polypeptide reads, in one-letter code: Cytoplasmic tRNA 2-thiolation protein 1 (369 aa).

This sequence belongs to the TtcA family. CTU1/NCS6/ATPBD3 subfamily.

The protein localises to the cytoplasm. Its pathway is tRNA modification; 5-methoxycarbonylmethyl-2-thiouridine-tRNA biosynthesis. In terms of biological role, plays a central role in 2-thiolation of mcm(5)S(2)U at tRNA wobble positions of tRNA(Lys), tRNA(Glu) and tRNA(Gln). Directly binds tRNAs and probably acts by catalyzing adenylation of tRNAs, an intermediate required for 2-thiolation. It is unclear whether it acts as a sulfurtransferase that transfers sulfur from thiocarboxylated URM1 onto the uridine of tRNAs at wobble position. Prior mcm(5) tRNA modification by the elongator complex is required for 2-thiolation. May also be involved in protein urmylation. The chain is Cytoplasmic tRNA 2-thiolation protein 1 from Cryptococcus neoformans var. neoformans serotype D (strain JEC21 / ATCC MYA-565) (Filobasidiella neoformans).